A 484-amino-acid chain; its full sequence is Transcription factor cghD (484 aa).

A DNA-binding region (zn(2)-C6 fungal-type) is located at residues cysteine 21–cysteine 54. Disordered regions lie at residues arginine 59–alanine 117, threonine 136–serine 174, proline 202–threonine 242, and histidine 386–serine 406. Basic and acidic residues predominate over residues arginine 64–threonine 76. Residues arginine 77–leucine 107 show a composition bias toward low complexity. The segment covering proline 202–threonine 213 has biased composition (low complexity).

It localises to the nucleus. Functionally, transcription factor that regulates the expression of the gene cluster that mediates the biosynthesis of the tetramic acid Sch210972, a potential anti-HIV fungal natural product that contains a decalin core. In Chaetomium globosum (strain ATCC 6205 / CBS 148.51 / DSM 1962 / NBRC 6347 / NRRL 1970) (Soil fungus), this protein is Transcription factor cghD.